We begin with the raw amino-acid sequence, 189 residues long: Protein GrpE (189 aa).

Residues 1–10 show a composition bias toward polar residues; sequence MADEQQQTLD. Residues 1 to 21 are disordered; it reads MADEQQQTLDPQAPEQTDAPE.

This sequence belongs to the GrpE family. As to quaternary structure, homodimer.

The protein resides in the cytoplasm. Functionally, participates actively in the response to hyperosmotic and heat shock by preventing the aggregation of stress-denatured proteins, in association with DnaK and GrpE. It is the nucleotide exchange factor for DnaK and may function as a thermosensor. Unfolded proteins bind initially to DnaJ; upon interaction with the DnaJ-bound protein, DnaK hydrolyzes its bound ATP, resulting in the formation of a stable complex. GrpE releases ADP from DnaK; ATP binding to DnaK triggers the release of the substrate protein, thus completing the reaction cycle. Several rounds of ATP-dependent interactions between DnaJ, DnaK and GrpE are required for fully efficient folding. The sequence is that of Protein GrpE from Pseudomonas paraeruginosa (strain DSM 24068 / PA7) (Pseudomonas aeruginosa (strain PA7)).